An 80-amino-acid chain; its full sequence is Large ribosomal subunit protein bL31 (80 aa).

Zn(2+) is bound by residues cysteine 16, cysteine 18, cysteine 38, and cysteine 41.

Belongs to the bacterial ribosomal protein bL31 family. Type A subfamily. In terms of assembly, part of the 50S ribosomal subunit. It depends on Zn(2+) as a cofactor.

Its function is as follows. Binds the 23S rRNA. The protein is Large ribosomal subunit protein bL31 of Mycobacterium bovis (strain ATCC BAA-935 / AF2122/97).